We begin with the raw amino-acid sequence, 473 residues long: Mogroside IIIx synthase (473 aa).

Catalysis depends on H43, which acts as the Proton acceptor. The active-site Charge relay is D142. S293, Q356, W374, N375, S376, E379, D395, and Q396 together coordinate UDP-alpha-D-glucose.

The protein belongs to the UDP-glycosyltransferase family. In terms of tissue distribution, highly expressed in mature fruits.

The catalysed reaction is mogroside IIE + UDP-alpha-D-glucose = mogroside IIIX + UDP + H(+). It carries out the reaction mogroside III + UDP-alpha-D-glucose = mogroside IV + UDP + H(+). It catalyses the reaction mogroside III + UDP-alpha-D-glucose = siamenoside I + UDP + H(+). The enzyme catalyses mogroside IIIX + UDP-alpha-D-glucose = mogroside IVA + UDP + H(+). The catalysed reaction is mogroside IIIX + UDP-alpha-D-glucose = siamenoside I + UDP + H(+). It carries out the reaction mogroside IV + UDP-alpha-D-glucose = mogroside V + UDP + H(+). It catalyses the reaction siamenoside I + UDP-alpha-D-glucose = mogroside V + UDP + H(+). The enzyme catalyses mogroside V + UDP-alpha-D-glucose = mogroside VI + UDP + H(+). The protein operates within secondary metabolite biosynthesis; terpenoid biosynthesis. With respect to regulation, activity is increased by Mg(2+). In terms of biological role, UDP-glycosyltransferase involved in the biosynthesis of cucurbitacin and mogroside tetracyclic triterpene natural products (e.g. siamenoside I and mogrosides IV, V and VI). Cucurbitacins have cytotoxic properties and exhibit deterrent taste as a defense barrier against herbivores. Mogrosides are nonsugar highly oxygenated compounds used as high-intensity zero-calorie sweeteners; they also possess pharmacological properties such as regulating immunity, lowering blood sugar and lipid levels, protecting the liver, and acting as antioxidants and antitumor agents. Functionally, catalyzes the branched glucosylations of mogroside II-E, mogroside III, mogroside IIIx, mogroside IV, mogroside IV-A, siamenoside I and mogroside V, ending in the production of mogroside VI. Its function is as follows. Catalyzes the beta(1-6) branched glucosylations of mogroside II-E to produce mogroside IIIx by forming a beta(1-6) glycosidic bond with the 6-hydroxyl of glucose 1-C24; a subsequent glycosylation at glucose 1-C3 leads to the formation of mogroside IV-A with beta(1-6) glycosidic bond. Can also use mogroside III-E, mogroside III-A, mogroside IV-E and mogroside IV-A as substrates. The sequence is that of Mogroside IIIx synthase from Siraitia grosvenorii (Monk's fruit).